A 390-amino-acid polypeptide reads, in one-letter code: Guanidine hydrolase (390 aa).

The Ni(2+) site is built by H174, D199, H201, D203, D291, and D293.

It belongs to the arginase family. Homohexamer. Ni(2+) serves as cofactor.

The protein resides in the cytoplasm. The catalysed reaction is guanidine + H2O = urea + NH4(+). Activation of GdmH depends on the presence of the accessory proteins GhaA (Sll1078) and GhaB (Sll1079), which load nickel into the active site. Hydrolase activity is slightly activated in the presence of GTP. It does not require ATP or NAD(P)H. Addition of Ca(2+), Mn(2+), Fe(2+) or Fe(3+) has no consistent effects, whereas addition of Co(2+), Cu(2+) or Zn(2+) inhibits the activity. In terms of biological role, catalyzes the hydrolysis of guanidine into urea and ammonium. Is highly specific for free guanidine. At pH 8, also catalyzes the release of urea from methylguanidine but with significantly reduced specific activity compared with that for guanidine. Cannot hydrolyze guanidinoacetate, guanidinopropionate, guanidinobutyrate, agmatine, arginine or creatine. Required to use guanidine as the sole nitrogen source for growth. Overexpression of the gene accelerates guanidine degradation and promotes biomass growth. This is Guanidine hydrolase from Synechocystis sp. (strain ATCC 27184 / PCC 6803 / Kazusa).